A 339-amino-acid polypeptide reads, in one-letter code: Uridylate kinase PUMPKIN, chloroplastic (339 aa).

The transit peptide at 1–53 directs the protein to the chloroplast; the sequence is MAIPLPLTSCSPISTSSSISRTSFVPLTLRNRTFFSNQNYSRRVLISCSSSLS. Residues 52 to 79 show a composition bias toward low complexity; that stretch reads LSSDNGSSPDSMNGNGNGNGSSLNGQSS. The interval 52 to 89 is disordered; it reads LSSDNGSSPDSMNGNGNGNGSSLNGQSSFPRLPSFDGT. An ATP-binding site is contributed by 102–105; that stretch reads KVSG. An involved in allosteric activation by GTP region spans residues 110–115; that stretch reads GDEEQN. Residue Gly144 coordinates UMP. Residues Gly145 and Arg149 each contribute to the ATP site. Residue Asp165 coordinates UMP. ATP contacts are provided by residues 180–184 and 189–191; these read QATME and PTR. Residue 226-233 participates in UMP binding; sequence TGNPFFTT. ATP is bound by residues Thr253, Phe259, and Asp262.

It belongs to the UMP kinase family. Homomultimer. Homohexamer. Forms RNA-containing megadalton-sized complexes. In terms of tissue distribution, expressed exclusively in leaves, but not in roots.

The protein resides in the plastid. Its subcellular location is the chloroplast stroma. It carries out the reaction UMP + ATP = UDP + ADP. It participates in pyrimidine metabolism; CTP biosynthesis via de novo pathway; UDP from UMP (UMPK route): step 1/1. Functionally, catalyzes the reversible phosphorylation of UMP to UDP. Required for specific post-transcriptional processes of many plastid transcripts (e.g. PSI (PsaA, PsaF), PSII (D1, CP43, CP47), Cytochrome b(6)f (Cytb(6)), ATP synthase (AtpC), LHCs (LHCa3, LHCb2), and NDH (NdhH)), thus being essential for retaining photosynthetic activity in chloroplasts. Associates with group II introns of the plastid transcripts trnG-UCC, trnV-UAC, petB, petD and ndhA to stabilize corresponding precursor RNAs. In Arabidopsis thaliana (Mouse-ear cress), this protein is Uridylate kinase PUMPKIN, chloroplastic.